A 207-amino-acid chain; its full sequence is MPTAAVFNIEGQQVGEIELSEAVFGQPVNDAVLHEVVVMQLANRRQGTHDTKTRSEVRGGGRKPWRQKGTGRARHGTIRSPIWRGGGIVFGPHPRDYSYRVPKKVKRLALKSALATKVDAGRILVLDALELPGPKTKEMARILANLKAGEGALVVTAERNVNVEKSARNLPGVKSLEARQLNVYDLLNHPHLIITRDAVARVEEVLA.

The tract at residues 44 to 77 (RRQGTHDTKTRSEVRGGGRKPWRQKGTGRARHGT) is disordered. The span at 47 to 59 (GTHDTKTRSEVRG) shows a compositional bias: basic and acidic residues. Over residues 60 to 77 (GGRKPWRQKGTGRARHGT) the composition is skewed to basic residues.

The protein belongs to the universal ribosomal protein uL4 family. In terms of assembly, part of the 50S ribosomal subunit.

Functionally, one of the primary rRNA binding proteins, this protein initially binds near the 5'-end of the 23S rRNA. It is important during the early stages of 50S assembly. It makes multiple contacts with different domains of the 23S rRNA in the assembled 50S subunit and ribosome. In terms of biological role, forms part of the polypeptide exit tunnel. The protein is Large ribosomal subunit protein uL4 of Desulforudis audaxviator (strain MP104C).